The sequence spans 442 residues: Protein PRRC1-A (442 aa).

A disordered region spans residues 1-27; that stretch reads MMEESGIETTPPSTPPPSTIGTSVPAA.

The protein belongs to the PRRC1 family.

It is found in the golgi apparatus. This Xenopus laevis (African clawed frog) protein is Protein PRRC1-A (prrc1-a).